The following is a 154-amino-acid chain: Hexachlorocyclohexane dehydrochlorinase 1 (154 aa).

Aspartate 25 is a catalytic residue. Histidine 73 (proton acceptor) is an active-site residue.

Belongs to the HCH dehydrochlorinase family. In terms of assembly, homotrimer.

It is found in the periplasm. The catalysed reaction is gamma-hexachlorocyclohexane = (3R,4S,5S,6R)-pentachlorocyclohexene + chloride + H(+). It catalyses the reaction (3R,4S,5S,6R)-pentachlorocyclohexene = (3R,6R)-1,3,4,6-tetrachlorocyclohexa-1,4-diene + chloride + H(+). The protein operates within xenobiotic degradation; hexachlorocyclohexane degradation. In terms of biological role, catalyzes the conversion of the important environmental pollutant gamma-hexachlorocyclohexane (gamma-HCH or lindane) to 1,3,4,6-tetrachloro-1,4-cyclohexadiene (1,4-TCDN) via gamma-pentachlorocyclohexene (gamma-PCCH). Proceeds by two successive 1,2-anti conformationally dependent dehydrochlorinations. Also shows activity with alpha- and delta-HCH, giving alpha- and delta-PCCH respectively, but not with the beta isomer. In Sphingobium indicum (strain DSM 16412 / CCM 7286 / MTCC 6364 / B90A), this protein is Hexachlorocyclohexane dehydrochlorinase 1.